The primary structure comprises 191 residues: Calcium-activated potassium channel subunit beta-1 (191 aa).

Residues 2-18 (GKKLVMAQRRGETRALC) lie on the Cytoplasmic side of the membrane. Residues 19–39 (LGVAMVVGAVITYYILGTTVL) form a helical membrane-spanning segment. At 40 to 157 (PLYQKSVWTQ…YRRLYGPQSL (118 aa)) the chain is on the extracellular side. N-linked (GlcNAc...) asparagine glycans are attached at residues Asn-80 and Asn-142. A helical transmembrane segment spans residues 158 to 178 (LFSLFWPTFLLTGGLLIIVMV). Residues 179 to 191 (KINQSLSILAAQR) are Cytoplasmic-facing.

It belongs to the KCNMB (TC 8.A.14.1) family. KCNMB1 subfamily. As to quaternary structure, interacts with KCNMA1 tetramer. There are probably 4 molecules of KCMNB1 per KCNMA1 tetramer. In terms of processing, N-glycosylated.

The protein resides in the membrane. Functionally, regulatory subunit of the calcium activated potassium KCNMA1 (maxiK) channel. Modulates the calcium sensitivity and gating kinetics of KCNMA1, thereby contributing to KCNMA1 channel diversity. Increases the apparent Ca(2+)/voltage sensitivity of the KCNMA1 channel. It also modifies KCNMA1 channel kinetics and alters its pharmacological properties. It slows down the activation and the deactivation kinetics of the channel. Acts as a negative regulator of smooth muscle contraction by enhancing the calcium sensitivity to KCNMA1. Its presence is also a requirement for internal binding of the KCNMA1 channel opener dehydrosoyasaponin I (DHS-1) triterpene glycoside and for external binding of the agonist hormone 17-beta-estradiol (E2). Increases the binding activity of charybdotoxin (CTX) toxin to KCNMA1 peptide blocker by increasing the CTX association rate and decreasing the dissociation rate. The protein is Calcium-activated potassium channel subunit beta-1 (KCNMB1) of Bos taurus (Bovine).